The following is a 169-amino-acid chain: Phosphopantetheine adenylyltransferase (169 aa).

Position 8 (Ser8) interacts with substrate. ATP is bound by residues 8–9 and His16; that span reads SF. 3 residues coordinate substrate: Lys40, Thr72, and Arg86. ATP contacts are provided by residues 87–89, Glu97, and 122–128; these read GLR and YSFLSSS.

The protein belongs to the bacterial CoaD family. Homohexamer. Mg(2+) is required as a cofactor.

It is found in the cytoplasm. It catalyses the reaction (R)-4'-phosphopantetheine + ATP + H(+) = 3'-dephospho-CoA + diphosphate. It functions in the pathway cofactor biosynthesis; coenzyme A biosynthesis; CoA from (R)-pantothenate: step 4/5. Its function is as follows. Reversibly transfers an adenylyl group from ATP to 4'-phosphopantetheine, yielding dephospho-CoA (dPCoA) and pyrophosphate. This is Phosphopantetheine adenylyltransferase from Cyanothece sp. (strain PCC 7425 / ATCC 29141).